The sequence spans 317 residues: 4-hydroxy-3-methylbut-2-enyl diphosphate reductase (317 aa).

Cysteine 12 contacts [4Fe-4S] cluster. (2E)-4-hydroxy-3-methylbut-2-enyl diphosphate is bound by residues histidine 43 and histidine 81. Residues histidine 43 and histidine 81 each contribute to the dimethylallyl diphosphate site. Histidine 43 and histidine 81 together coordinate isopentenyl diphosphate. Cysteine 103 lines the [4Fe-4S] cluster pocket. Histidine 131 contributes to the (2E)-4-hydroxy-3-methylbut-2-enyl diphosphate binding site. Histidine 131 is a dimethylallyl diphosphate binding site. Isopentenyl diphosphate is bound at residue histidine 131. Residue glutamate 133 is the Proton donor of the active site. Residue threonine 172 coordinates (2E)-4-hydroxy-3-methylbut-2-enyl diphosphate. Cysteine 200 is a [4Fe-4S] cluster binding site. (2E)-4-hydroxy-3-methylbut-2-enyl diphosphate is bound by residues serine 228, asparagine 230, and serine 273. The dimethylallyl diphosphate site is built by serine 228, asparagine 230, and serine 273. Residues serine 228, asparagine 230, and serine 273 each contribute to the isopentenyl diphosphate site.

This sequence belongs to the IspH family. [4Fe-4S] cluster is required as a cofactor.

The catalysed reaction is isopentenyl diphosphate + 2 oxidized [2Fe-2S]-[ferredoxin] + H2O = (2E)-4-hydroxy-3-methylbut-2-enyl diphosphate + 2 reduced [2Fe-2S]-[ferredoxin] + 2 H(+). It carries out the reaction dimethylallyl diphosphate + 2 oxidized [2Fe-2S]-[ferredoxin] + H2O = (2E)-4-hydroxy-3-methylbut-2-enyl diphosphate + 2 reduced [2Fe-2S]-[ferredoxin] + 2 H(+). It participates in isoprenoid biosynthesis; dimethylallyl diphosphate biosynthesis; dimethylallyl diphosphate from (2E)-4-hydroxy-3-methylbutenyl diphosphate: step 1/1. It functions in the pathway isoprenoid biosynthesis; isopentenyl diphosphate biosynthesis via DXP pathway; isopentenyl diphosphate from 1-deoxy-D-xylulose 5-phosphate: step 6/6. Functionally, catalyzes the conversion of 1-hydroxy-2-methyl-2-(E)-butenyl 4-diphosphate (HMBPP) into a mixture of isopentenyl diphosphate (IPP) and dimethylallyl diphosphate (DMAPP). Acts in the terminal step of the DOXP/MEP pathway for isoprenoid precursor biosynthesis. This Exiguobacterium sp. (strain ATCC BAA-1283 / AT1b) protein is 4-hydroxy-3-methylbut-2-enyl diphosphate reductase.